The following is a 298-amino-acid chain: Probable endonuclease 4 (298 aa).

Zn(2+) contacts are provided by His-70, His-111, Glu-146, Asp-180, His-183, His-215, Asp-228, His-230, and Glu-260.

Belongs to the AP endonuclease 2 family. Requires Zn(2+) as cofactor.

The enzyme catalyses Endonucleolytic cleavage to 5'-phosphooligonucleotide end-products.. In terms of biological role, endonuclease IV plays a role in DNA repair. It cleaves phosphodiester bonds at apurinic or apyrimidinic (AP) sites, generating a 3'-hydroxyl group and a 5'-terminal sugar phosphate. This Halalkalibacterium halodurans (strain ATCC BAA-125 / DSM 18197 / FERM 7344 / JCM 9153 / C-125) (Bacillus halodurans) protein is Probable endonuclease 4.